The following is a 462-amino-acid chain: ATP synthase subunit beta 1 (462 aa).

Glycine 151–threonine 158 contributes to the ATP binding site.

Belongs to the ATPase alpha/beta chains family. F-type ATPases have 2 components, CF(1) - the catalytic core - and CF(0) - the membrane proton channel. CF(1) has five subunits: alpha(3), beta(3), gamma(1), delta(1), epsilon(1). CF(0) has four main subunits: a(1), b(1), b'(1) and c(9-12).

The protein localises to the cell inner membrane. It carries out the reaction ATP + H2O + 4 H(+)(in) = ADP + phosphate + 5 H(+)(out). In terms of biological role, produces ATP from ADP in the presence of a proton gradient across the membrane. The catalytic sites are hosted primarily by the beta subunits. This Chlorobium luteolum (strain DSM 273 / BCRC 81028 / 2530) (Pelodictyon luteolum) protein is ATP synthase subunit beta 1.